Here is a 54-residue protein sequence, read N- to C-terminus: Light-harvesting protein B-870 beta chain (54 aa).

Residues 1-20 (EVKQESLSGITEGEAKEFHK) are Cytoplasmic-facing. A bacteriochlorophyll contacts are provided by His-19 and His-37. Residues 21-43 (IFTSSILVFFGVAAFAHLLVWIW) form a helical membrane-spanning segment. At 44 to 54 (RPWVPGPNGYS) the chain is on the periplasmic side.

Belongs to the antenna complex beta subunit family. In terms of assembly, the core complex is formed by different alpha and beta chains, binding bacteriochlorophyll molecules, and arranged most probably in tetrameric structures disposed around the reaction center. The non-pigmented gamma chains may constitute additional components.

Its subcellular location is the cell inner membrane. Antenna complexes are light-harvesting systems, which transfer the excitation energy to the reaction centers. In Rhodospirillum rubrum, this protein is Light-harvesting protein B-870 beta chain.